The chain runs to 901 residues: Protein translocase subunit SecA (901 aa).

ATP is bound by residues Q87, 105–109 (GEGKT), and D512. The segment at 852 to 901 (AQMQQLSHQSDDEAAAEDLAAQTGERKVGRNDPCPCGSGKKYKQCHGRLS) is disordered. The Zn(2+) site is built by C885, C887, C896, and H897. Basic residues predominate over residues 891–901 (KKYKQCHGRLS).

The protein belongs to the SecA family. In terms of assembly, monomer and homodimer. Part of the essential Sec protein translocation apparatus which comprises SecA, SecYEG and auxiliary proteins SecDF-YajC and YidC. It depends on Zn(2+) as a cofactor.

The protein localises to the cell inner membrane. It is found in the cytoplasm. It carries out the reaction ATP + H2O + cellular proteinSide 1 = ADP + phosphate + cellular proteinSide 2.. Part of the Sec protein translocase complex. Interacts with the SecYEG preprotein conducting channel. Has a central role in coupling the hydrolysis of ATP to the transfer of proteins into and across the cell membrane, serving both as a receptor for the preprotein-SecB complex and as an ATP-driven molecular motor driving the stepwise translocation of polypeptide chains across the membrane. The chain is Protein translocase subunit SecA from Klebsiella pneumoniae (strain 342).